We begin with the raw amino-acid sequence, 214 residues long: A-type ATP synthase subunit D (214 aa).

The protein belongs to the V-ATPase D subunit family. Has multiple subunits with at least A(3), B(3), C, D, E, F, H, I and proteolipid K(x).

It localises to the cell membrane. Component of the A-type ATP synthase that produces ATP from ADP in the presence of a proton gradient across the membrane. In Thermococcus gammatolerans (strain DSM 15229 / JCM 11827 / EJ3), this protein is A-type ATP synthase subunit D.